The chain runs to 93 residues: uncharacterized protein (93 aa).

An N-terminal signal peptide occupies residues 1 to 11 (MALMVLMALVG). Cys-12 is lipidated: N-palmitoyl cysteine. Residue Cys-12 is the site of S-diacylglycerol cysteine attachment.

The protein localises to the cell membrane. This is an uncharacterized protein from Escherichia coli O6:K15:H31 (strain 536 / UPEC).